Here is a 461-residue protein sequence, read N- to C-terminus: MKKILVIGDLIADYYLWGKSERLSPEAPVPVLEVQRESKNLGGAANVANNLISLKAKVFLCGVVGDDLEGEHFISALKARGIDASGILIDKTRCTTLKTRIIAQNQQIARVDKEIKDPLNADLRKKLLDFFTEKIQEIDGVILSDYNKGVLDFELTQAMIALANQHHKLILCDPKGKDYSKYSHASLITPNRTELEHALHLKLDSHANLSKALQILKETYHIAMPLVTLSEQGIAFLEKGELVNCPTIAKEVYDVTGAGDTVIASLTLSLLESMSLKDACEFANAAAAVVVGKMGSALASLEEIALILNQTHPKILSLEKLLETLDQQKIIFTNGCFDLLHKGHASYLQKAKALGDILIVGLNSDASIKRLKGDKRPIVSEKDRAFLLASLSCVDYVVVFEEDTPIKLIQALKPDILVKGADYLNKEVIGSEFAKETHLMEFEEGYSTSAIIEKIKRTCND.

A ribokinase region spans residues 1-315 (MKKILVIGDL…LILNQTHPKI (315 aa)). 191–194 (NRTE) is a binding site for ATP. D260 is an active-site residue. The tract at residues 332 to 461 (FTNGCFDLLH…IEKIKRTCND (130 aa)) is cytidylyltransferase.

The protein in the N-terminal section; belongs to the carbohydrate kinase PfkB family. It in the C-terminal section; belongs to the cytidylyltransferase family. In terms of assembly, homodimer.

The enzyme catalyses D-glycero-beta-D-manno-heptose 7-phosphate + ATP = D-glycero-beta-D-manno-heptose 1,7-bisphosphate + ADP + H(+). It carries out the reaction D-glycero-beta-D-manno-heptose 1-phosphate + ATP + H(+) = ADP-D-glycero-beta-D-manno-heptose + diphosphate. Its pathway is nucleotide-sugar biosynthesis; ADP-L-glycero-beta-D-manno-heptose biosynthesis; ADP-L-glycero-beta-D-manno-heptose from D-glycero-beta-D-manno-heptose 7-phosphate: step 1/4. It participates in nucleotide-sugar biosynthesis; ADP-L-glycero-beta-D-manno-heptose biosynthesis; ADP-L-glycero-beta-D-manno-heptose from D-glycero-beta-D-manno-heptose 7-phosphate: step 3/4. It functions in the pathway bacterial outer membrane biogenesis; LPS core biosynthesis. Its function is as follows. Catalyzes the phosphorylation of D-glycero-D-manno-heptose 7-phosphate at the C-1 position to selectively form D-glycero-beta-D-manno-heptose-1,7-bisphosphate. Functionally, catalyzes the ADP transfer from ATP to D-glycero-beta-D-manno-heptose 1-phosphate, yielding ADP-D-glycero-beta-D-manno-heptose. This Helicobacter pylori (strain ATCC 700392 / 26695) (Campylobacter pylori) protein is Bifunctional protein HldE.